The following is a 207-amino-acid chain: Cytochrome c biogenesis ATP-binding export protein CcmA (207 aa).

The ABC transporter domain maps to leucine 4–alanine 207. Glycine 36–threonine 43 is a binding site for ATP.

Belongs to the ABC transporter superfamily. CcmA exporter (TC 3.A.1.107) family. In terms of assembly, the complex is composed of two ATP-binding proteins (CcmA) and two transmembrane proteins (CcmB).

It localises to the cell inner membrane. The catalysed reaction is heme b(in) + ATP + H2O = heme b(out) + ADP + phosphate + H(+). Part of the ABC transporter complex CcmAB involved in the biogenesis of c-type cytochromes; once thought to export heme, this seems not to be the case, but its exact role is uncertain. Responsible for energy coupling to the transport system. This is Cytochrome c biogenesis ATP-binding export protein CcmA from Shigella sonnei (strain Ss046).